A 234-amino-acid polypeptide reads, in one-letter code: Prolactin-6A1 (234 aa).

The signal sequence occupies residues 1–33 (MVKSWLRMSKKMEAGTLLMLLMSNILLWENVAS). N-linked (GlcNAc...) asparagine glycosylation occurs at asparagine 61. 2 disulfides stabilise this stretch: cysteine 93–cysteine 209 and cysteine 226–cysteine 234.

It belongs to the somatotropin/prolactin family.

The protein resides in the secreted. This is Prolactin-6A1 (Prl6a1) from Rattus norvegicus (Rat).